The following is a 355-amino-acid chain: 3-dehydroquinate synthase (355 aa).

Residues 105 to 109 (GVVGD), 129 to 130 (TS), lysine 142, lysine 151, and 169 to 172 (TLKT) each bind NAD(+). Residues glutamate 184, histidine 246, and histidine 263 each coordinate Zn(2+).

The protein belongs to the sugar phosphate cyclases superfamily. Dehydroquinate synthase family. It depends on Co(2+) as a cofactor. Zn(2+) serves as cofactor. NAD(+) is required as a cofactor.

It is found in the cytoplasm. It catalyses the reaction 7-phospho-2-dehydro-3-deoxy-D-arabino-heptonate = 3-dehydroquinate + phosphate. The protein operates within metabolic intermediate biosynthesis; chorismate biosynthesis; chorismate from D-erythrose 4-phosphate and phosphoenolpyruvate: step 2/7. Catalyzes the conversion of 3-deoxy-D-arabino-heptulosonate 7-phosphate (DAHP) to dehydroquinate (DHQ). The sequence is that of 3-dehydroquinate synthase from Streptococcus agalactiae serotype Ia (strain ATCC 27591 / A909 / CDC SS700).